Reading from the N-terminus, the 418-residue chain is Tyrosine--tRNA ligase (418 aa).

Residue tyrosine 34 coordinates L-tyrosine. The 'HIGH' region signature appears at 39–48; sequence PTADSLHLGH. L-tyrosine contacts are provided by tyrosine 169 and glutamine 173. The short motif at 229 to 233 is the 'KMSKS' region element; it reads KFGKS. Lysine 232 contacts ATP. The 59-residue stretch at 352 to 410 folds into the S4 RNA-binding domain; that stretch reads LNIVELLVTSGIVNSKRQAREDVQNGAIYVNGERVQDLDYTLSDSDKIDGELTVIRRGK.

The protein belongs to the class-I aminoacyl-tRNA synthetase family. TyrS type 1 subfamily. As to quaternary structure, homodimer.

It is found in the cytoplasm. The catalysed reaction is tRNA(Tyr) + L-tyrosine + ATP = L-tyrosyl-tRNA(Tyr) + AMP + diphosphate + H(+). Catalyzes the attachment of tyrosine to tRNA(Tyr) in a two-step reaction: tyrosine is first activated by ATP to form Tyr-AMP and then transferred to the acceptor end of tRNA(Tyr). This Streptococcus suis (strain 98HAH33) protein is Tyrosine--tRNA ligase.